The primary structure comprises 485 residues: Glutamyl-tRNA(Gln) amidotransferase subunit A (485 aa).

Active-site charge relay system residues include Lys78 and Ser153. The Acyl-ester intermediate role is filled by Ser177.

This sequence belongs to the amidase family. GatA subfamily. In terms of assembly, heterotrimer of A, B and C subunits.

It catalyses the reaction L-glutamyl-tRNA(Gln) + L-glutamine + ATP + H2O = L-glutaminyl-tRNA(Gln) + L-glutamate + ADP + phosphate + H(+). In terms of biological role, allows the formation of correctly charged Gln-tRNA(Gln) through the transamidation of misacylated Glu-tRNA(Gln) in organisms which lack glutaminyl-tRNA synthetase. The reaction takes place in the presence of glutamine and ATP through an activated gamma-phospho-Glu-tRNA(Gln). This is Glutamyl-tRNA(Gln) amidotransferase subunit A from Bacillus cereus (strain ATCC 10987 / NRS 248).